A 485-amino-acid polypeptide reads, in one-letter code: Betaine aldehyde dehydrogenase (485 aa).

K(+) is bound by residues T23, I24, and D90. Residue 147-149 (GAW) participates in NAD(+) binding. K159 functions as the Charge relay system in the catalytic mechanism. NAD(+) is bound by residues 173 to 176 (KPSE) and 226 to 229 (EVGT). L241 is a binding site for K(+). E247 (proton acceptor) is an active-site residue. NAD(+) is bound by residues G249, C281, and E382. Catalysis depends on C281, which acts as the Nucleophile. Cysteine sulfenic acid (-SOH) is present on C281. K452 and G455 together coordinate K(+). E459 (charge relay system) is an active-site residue.

This sequence belongs to the aldehyde dehydrogenase family. As to quaternary structure, dimer of dimers. Requires K(+) as cofactor.

It carries out the reaction betaine aldehyde + NAD(+) + H2O = glycine betaine + NADH + 2 H(+). The protein operates within amine and polyamine biosynthesis; betaine biosynthesis via choline pathway; betaine from betaine aldehyde: step 1/1. Functionally, involved in the biosynthesis of the osmoprotectant glycine betaine. Catalyzes the irreversible oxidation of betaine aldehyde to the corresponding acid. The protein is Betaine aldehyde dehydrogenase of Marinomonas sp. (strain MWYL1).